A 478-amino-acid polypeptide reads, in one-letter code: Proline--tRNA ligase (478 aa).

The protein belongs to the class-II aminoacyl-tRNA synthetase family. ProS type 3 subfamily. In terms of assembly, homodimer.

The protein resides in the cytoplasm. It carries out the reaction tRNA(Pro) + L-proline + ATP = L-prolyl-tRNA(Pro) + AMP + diphosphate. Its function is as follows. Catalyzes the attachment of proline to tRNA(Pro) in a two-step reaction: proline is first activated by ATP to form Pro-AMP and then transferred to the acceptor end of tRNA(Pro). The polypeptide is Proline--tRNA ligase (Clostridium botulinum (strain ATCC 19397 / Type A)).